The primary structure comprises 288 residues: MININNINPEKPVLIVGPTASGKTSLAIAIAQAQGRVVVNADALQVYDGWRVLTARPTPEEEDAVPHHLYGHVPFTAHYDVGQWLQDLTPFLAQNPVIVGGTGLYFRALTQGLADIPAIPPDIRAEADARSHTQRLADLHEGDPALVARIDCDNPMRVQRGWEVLRATGRPLSAWQDETPPPLLPLGNTTPLALMPDRDWLNARIAQRFDQMLNEGALDEARANLPRWSSAGGAAKAIGAPELIAHLHGTLPLAAARDAAVTATRQYAKRQRSWQRSNTQAWQSVPLP.

Residue 17–24 (GPTASGKT) coordinates ATP. 19-24 (TASGKT) provides a ligand contact to substrate.

The protein belongs to the IPP transferase family. Monomer. Mg(2+) is required as a cofactor.

The enzyme catalyses adenosine(37) in tRNA + dimethylallyl diphosphate = N(6)-dimethylallyladenosine(37) in tRNA + diphosphate. In terms of biological role, catalyzes the transfer of a dimethylallyl group onto the adenine at position 37 in tRNAs that read codons beginning with uridine, leading to the formation of N6-(dimethylallyl)adenosine (i(6)A). In Jannaschia sp. (strain CCS1), this protein is tRNA dimethylallyltransferase.